The sequence spans 251 residues: MSEATALSPAEFEQALRAKGAYYHIYHPFHVAMYEGRATREQIQGWVANRFYYQVNIPLKDAAILANCPDREIRREWIQRLLDHDGAPGEDGGIEAWLRLGEAVGLDPDQLRSQELVLPGVRFAVDAYVNFARRANWQEAASSSLTELFAPQIHQSRLDSWPQHYPWIDPTGYEYFRTRLGQARRDVEHGLAITLQHYTTYEGQQRMLEILQFKLDILWSMLDAMSMAYELNRPPYHSVTDQKVWHKGITP.

Belongs to the PqqC family.

It carries out the reaction 6-(2-amino-2-carboxyethyl)-7,8-dioxo-1,2,3,4,7,8-hexahydroquinoline-2,4-dicarboxylate + 3 O2 = pyrroloquinoline quinone + 2 H2O2 + 2 H2O + H(+). The protein operates within cofactor biosynthesis; pyrroloquinoline quinone biosynthesis. In terms of biological role, ring cyclization and eight-electron oxidation of 3a-(2-amino-2-carboxyethyl)-4,5-dioxo-4,5,6,7,8,9-hexahydroquinoline-7,9-dicarboxylic-acid to PQQ. The sequence is that of Pyrroloquinoline-quinone synthase from Pseudomonas syringae pv. tomato (strain ATCC BAA-871 / DC3000).